The chain runs to 300 residues: Recombination-associated protein RdgC (300 aa).

It belongs to the RdgC family.

The protein resides in the cytoplasm. It is found in the nucleoid. May be involved in recombination. The polypeptide is Recombination-associated protein RdgC (Herminiimonas arsenicoxydans).